We begin with the raw amino-acid sequence, 102 residues long: MAKQKIRIRLKAFEHRILDQSADKIVETAKRTGASISGPIPLPTERTLYTVLRSPHKHKDSREQFEMRTHKRLIDIVNPTPKTVDSLMKLDLPSGVDIEIKL.

This sequence belongs to the universal ribosomal protein uS10 family. Part of the 30S ribosomal subunit.

Involved in the binding of tRNA to the ribosomes. This Latilactobacillus sakei subsp. sakei (strain 23K) (Lactobacillus sakei subsp. sakei) protein is Small ribosomal subunit protein uS10.